The sequence spans 481 residues: 5-hydroxytryptamine receptor 2B (481 aa).

Over 1–56 the chain is Extracellular; sequence MALSYRVSELQSTIPEHILQSTFVHVISSNWSGLQTESIPEEMKQIVEEQGNKLHW. N30 carries an N-linked (GlcNAc...) asparagine glycan. The helical transmembrane segment at 57–79 threads the bilayer; sequence AALLILMVIIPTIGGNTLVILAV. The Cytoplasmic portion of the chain corresponds to 80–90; sequence SLEKKLQYATN. Residues 91 to 113 traverse the membrane as a helical segment; sequence YFLMSLAVADLLVGLFVMPIALL. Residues 114 to 129 lie on the Extracellular side of the membrane; that stretch reads TIMFEAMWPLPLVLCP. C128 and C207 are disulfide-bonded. The helical transmembrane segment at 130–151 threads the bilayer; that stretch reads AWLFLDVLFSTASIMHLCAISV. Residues D135 and T140 each contribute to the ergotamine site. A DRY motif; important for ligand-induced conformation changes motif is present at residues 152 to 154; that stretch reads DRY. Residues 152-171 lie on the Cytoplasmic side of the membrane; sequence DRYIAIKKPIQANQYNSRAT. A helical transmembrane segment spans residues 172–192; the sequence is AFIKITVVWLISIGIAIPVPI. Topologically, residues 193–216 are extracellular; sequence KGIETDVDNPNNITCVLTKERFGD. L209 serves as a coordination point for ergotamine. The [DE]RFG motif; may stabilize a conformation that preferentially activates signaling via beta-arrestin family members motif lies at 212–215; that stretch reads ERFG. A helical membrane pass occupies residues 217 to 239; that stretch reads FMLFGSLAAFFTPLAIMIVTYFL. The Cytoplasmic portion of the chain corresponds to 240–324; the sequence is TIHALQKKAY…TISNEQRASK (85 aa). Residues 325–345 traverse the membrane as a helical segment; sequence VLGIVFFLFLLMWCPFFITNI. Residues 346 to 360 lie on the Extracellular side of the membrane; that stretch reads TLVLCDSCNQTTLQM. The cysteines at positions 350 and 353 are disulfide-linked. A helical transmembrane segment spans residues 361–382; it reads LLEIFVWIGYVSSGVNPLVYTL. The NPxxY motif; important for ligand-induced conformation changes and signaling motif lies at 376–380; it reads NPLVY. Topologically, residues 383–481 are cytoplasmic; that stretch reads FNKTFRDAFG…DKTEEQVSYV (99 aa). Residue C397 is the site of S-palmitoyl cysteine attachment. A PDZ-binding motif is present at residues 479-481; the sequence is SYV.

Belongs to the G-protein coupled receptor 1 family. Interacts (via C-terminus) with MPDZ. In terms of tissue distribution, ubiquitous. Detected in liver, kidney, heart, pulmonary artery, and intestine. Detected at lower levels in blood, placenta and brain, especially in cerebellum, occipital cortex and frontal cortex.

The protein resides in the cell membrane. Its subcellular location is the synapse. It localises to the synaptosome. Functionally, G-protein coupled receptor for 5-hydroxytryptamine (serotonin). Also functions as a receptor for various ergot alkaloid derivatives and psychoactive substances. Ligand binding causes a conformation change that triggers signaling via guanine nucleotide-binding proteins (G proteins) and modulates the activity of downstream effectors. HTR2B is coupled to G(q)/G(11) G alpha proteins and activates phospholipase C-beta, releasing diacylglycerol (DAG) and inositol 1,4,5-trisphosphate (IP3) second messengers that modulate the activity of phosphatidylinositol 3-kinase and promote the release of Ca(2+) ions from intracellular stores, respectively. Beta-arrestin family members inhibit signaling via G proteins and mediate activation of alternative signaling pathways. Plays a role in the regulation of dopamine and 5-hydroxytryptamine release, 5-hydroxytryptamine uptake and in the regulation of extracellular dopamine and 5-hydroxytryptamine levels, and thereby affects neural activity. May play a role in the perception of pain. Plays a role in the regulation of behavior, including impulsive behavior. Required for normal proliferation of embryonic cardiac myocytes and normal heart development. Protects cardiomyocytes against apoptosis. Plays a role in the adaptation of pulmonary arteries to chronic hypoxia. Plays a role in vasoconstriction. Required for normal osteoblast function and proliferation, and for maintaining normal bone density. Required for normal proliferation of the interstitial cells of Cajal in the intestine. The protein is 5-hydroxytryptamine receptor 2B of Homo sapiens (Human).